We begin with the raw amino-acid sequence, 153 residues long: Alpha-amylase type B isozyme (153 aa).

Residues Lys19, 25-27, His38, Gln44, Lys123, and Trp150 each bind substrate; that span reads GWW.

This sequence belongs to the glycosyl hydrolase 13 family. Monomer. Requires Ca(2+) as cofactor.

It carries out the reaction Endohydrolysis of (1-&gt;4)-alpha-D-glucosidic linkages in polysaccharides containing three or more (1-&gt;4)-alpha-linked D-glucose units.. This is Alpha-amylase type B isozyme (AMY1.4) from Hordeum vulgare (Barley).